The sequence spans 508 residues: Photosystem II CP47 reaction center protein (508 aa).

6 helical membrane passes run 21-36 (AVHI…WAGS), 101-115 (IVFS…IWHW), 140-156 (GIHL…FGAF), 203-218 (IAAG…FHLS), 237-252 (VLSS…AFVV), and 457-472 (SFAL…HGAR).

The protein belongs to the PsbB/PsbC family. PsbB subfamily. As to quaternary structure, PSII is composed of 1 copy each of membrane proteins PsbA, PsbB, PsbC, PsbD, PsbE, PsbF, PsbH, PsbI, PsbJ, PsbK, PsbL, PsbM, PsbT, PsbX, PsbY, PsbZ, Psb30/Ycf12, at least 3 peripheral proteins of the oxygen-evolving complex and a large number of cofactors. It forms dimeric complexes. Binds multiple chlorophylls. PSII binds additional chlorophylls, carotenoids and specific lipids. serves as cofactor.

The protein resides in the plastid. The protein localises to the chloroplast thylakoid membrane. In terms of biological role, one of the components of the core complex of photosystem II (PSII). It binds chlorophyll and helps catalyze the primary light-induced photochemical processes of PSII. PSII is a light-driven water:plastoquinone oxidoreductase, using light energy to abstract electrons from H(2)O, generating O(2) and a proton gradient subsequently used for ATP formation. This is Photosystem II CP47 reaction center protein from Ranunculus macranthus (Large buttercup).